Reading from the N-terminus, the 246-residue chain is UDP-N-acetyl-D-mannosaminuronic acid transferase (246 aa).

This sequence belongs to the glycosyltransferase 26 family.

It carries out the reaction UDP-N-acetyl-alpha-D-mannosaminouronate + N-acetyl-alpha-D-glucosaminyl-di-trans,octa-cis-undecaprenyl diphosphate = beta-D-ManNAcA-(1-&gt;4)-alpha-D-GlcNAc-di-trans,octa-cis-undecaprenyl diphosphate + UDP + H(+). The protein operates within bacterial outer membrane biogenesis; enterobacterial common antigen biosynthesis. Catalyzes the synthesis of Und-PP-GlcNAc-ManNAcA (Lipid II), the second lipid-linked intermediate involved in enterobacterial common antigen (ECA) synthesis. The polypeptide is UDP-N-acetyl-D-mannosaminuronic acid transferase (Escherichia coli O157:H7).